We begin with the raw amino-acid sequence, 239 residues long: MEKDKVFAKPIEKRFEFDEEVASVFDDMIARSVPFYKENMALVRDIVVKNVVQKDRVYDLGCSTGSLLIDIAKRSPFSLELIGLDSSEAMLQRAHHKAKAFGVSIDFQKADIISYAYKPAKIFISNYTLQFIRPLKREPLVQKIYDALVDEGIFVFSEKVISADKTLDKQLLDIYFDFKKKQGYSDFEIAQKREALENVLVPYTLEENMEMVKKCGFGFVEPIFRWANFVTFVAIKRKK.

S-adenosyl-L-methionine is bound by residues Tyr36, Gly61 to Ser63, Asp111 to Ile112, Asn126, and Arg193.

It belongs to the class I-like SAM-binding methyltransferase superfamily. Cx-SAM synthase family. As to quaternary structure, homodimer.

It catalyses the reaction prephenate + S-adenosyl-L-methionine = carboxy-S-adenosyl-L-methionine + 3-phenylpyruvate + H2O. Functionally, catalyzes the conversion of S-adenosyl-L-methionine (SAM) to carboxy-S-adenosyl-L-methionine (Cx-SAM). The polypeptide is Carboxy-S-adenosyl-L-methionine synthase (Nitratiruptor sp. (strain SB155-2)).